A 265-amino-acid polypeptide reads, in one-letter code: Hydroxyethylthiazole kinase (265 aa).

Met50 serves as a coordination point for substrate. 2 residues coordinate ATP: Arg125 and Thr171. Substrate is bound at residue Gly198.

This sequence belongs to the Thz kinase family. Mg(2+) serves as cofactor.

It catalyses the reaction 5-(2-hydroxyethyl)-4-methylthiazole + ATP = 4-methyl-5-(2-phosphooxyethyl)-thiazole + ADP + H(+). The protein operates within cofactor biosynthesis; thiamine diphosphate biosynthesis; 4-methyl-5-(2-phosphoethyl)-thiazole from 5-(2-hydroxyethyl)-4-methylthiazole: step 1/1. Its function is as follows. Catalyzes the phosphorylation of the hydroxyl group of 4-methyl-5-beta-hydroxyethylthiazole (THZ). The polypeptide is Hydroxyethylthiazole kinase (Salmonella choleraesuis (strain SC-B67)).